The chain runs to 82 residues: Small ribosomal subunit protein bS20 (82 aa).

Belongs to the bacterial ribosomal protein bS20 family.

In terms of biological role, binds directly to 16S ribosomal RNA. This is Small ribosomal subunit protein bS20 from Streptococcus suis (strain 98HAH33).